The following is a 1209-amino-acid chain: Putative lysine-specific demethylase JMJ16 (1209 aa).

The region spanning Ala-146–Pro-187 is the JmjN domain. The Nuclear localization signal motif lies at Met-217–Pro-224. The JmjC domain maps to Lys-361–Cys-527. Fe cation is bound by residues His-407, Glu-409, and His-495. Zn(2+) is bound by residues Cys-617, Cys-620, Cys-631, Cys-633, Cys-640, His-643, Cys-648, and Cys-650. The segment at Cys-617 to Asn-667 adopts a C5HC2 zinc-finger fold. The disordered stretch occupies residues Asp-872–Val-900. Polar residues predominate over residues Asn-875–Gln-884. The region spanning Val-974 to Ala-1032 is the FYR N-terminal domain. In terms of domain architecture, FYR C-terminal spans Arg-1034–Arg-1124.

The protein belongs to the JARID1 histone demethylase family. As to quaternary structure, interacts with MMD1 in the nucleus of male meiocytes, especially on pachytene chromosomes. Requires Fe(2+) as cofactor. As to expression, confined to inflorescences.

Its subcellular location is the nucleus. The catalysed reaction is N(6),N(6),N(6)-trimethyl-L-lysyl(4)-[histone H3] + 2-oxoglutarate + O2 = N(6),N(6)-dimethyl-L-lysyl(4)-[histone H3] + formaldehyde + succinate + CO2. It carries out the reaction N(6),N(6)-dimethyl-L-lysyl(4)-[histone H3] + 2-oxoglutarate + O2 = N(6)-methyl-L-lysyl(4)-[histone H3] + formaldehyde + succinate + CO2. It catalyses the reaction N(6)-methyl-L-lysyl(4)-[histone H3] + 2-oxoglutarate + O2 = L-lysyl(4)-[histone H3] + formaldehyde + succinate + CO2. In terms of biological role, functions as a histone H3 'Lys-4' (H3K4me) demethylase involved in the negative regulation of gene expression. Active on H3K4me1, H3K4me2 and H3K4me3. Not active on mono-, di- and trimethylated H3K9, H3K27 and H3K36 in somatic cells. However, also active on H3K9 when in complex with MMD1, a meiocyte-specific histone reader. Together with MMD1, promotes gene expression in male meiocytes in an H3K9me3-dependent manner, and contributes to meiotic chromosome condensation by triggering some condensin promoters (e.g. CAP-D3 and CAP-H). Together with JMJ14 and JMJ17, required for plant growth and development. Represses leaf senescence in an age-dependent manner by demethylating H3K4me3 activating histone marks at senescence-associated genes (SAGs) loci, including WRKY53 and SAG201, thus preventing their premature expression. In Arabidopsis thaliana (Mouse-ear cress), this protein is Putative lysine-specific demethylase JMJ16.